We begin with the raw amino-acid sequence, 287 residues long: Phosphoribosylaminoimidazole-succinocarboxamide synthase (287 aa).

Belongs to the SAICAR synthetase family.

The catalysed reaction is 5-amino-1-(5-phospho-D-ribosyl)imidazole-4-carboxylate + L-aspartate + ATP = (2S)-2-[5-amino-1-(5-phospho-beta-D-ribosyl)imidazole-4-carboxamido]succinate + ADP + phosphate + 2 H(+). It participates in purine metabolism; IMP biosynthesis via de novo pathway; 5-amino-1-(5-phospho-D-ribosyl)imidazole-4-carboxamide from 5-amino-1-(5-phospho-D-ribosyl)imidazole-4-carboxylate: step 1/2. In Neisseria meningitidis serogroup B (strain ATCC BAA-335 / MC58), this protein is Phosphoribosylaminoimidazole-succinocarboxamide synthase.